Consider the following 483-residue polypeptide: MAPEGDQRVGSGDSDFVVVANRLPIDMERLPDGSTSIKRSPGGLVTALEPLLRKRRGAWIGWAGIPDSPEDPIEEDGLQLYPVALSADDVADYYEGFSNATLWPLYHDLIVKPIYHRKWWDRYVEVNRRFAEATARAAAQGATVWVQDYQLQLVPKMLRMLRPDLTIGFFLHIPFPPVELFMQMPWRTEIIEGLLGADLVGFHLPGGAQNFLYLSRRLTGANTSRASVGVRSRFGEVQVGFRTVKVGAFPISIDSAELDSKARNRSVRQRAREIRNELGNPRKILLGVDRLDYTKGINVRLEAFSELLEDGRVDRNDTVLIQLATPSRERVESYIAMREDIERQVGHINGEFGDVGHPIVHYLHRPVPRDELIAFFVAADVMLVTPLRDGMNLVAKEYVACRSDLGGALVLSEFTGAAAELRQAYLANPHHLEGVKDAIEAALNQDPEEGRRRMRALRRQVLAHDVDRWARAFLDALADTKSA.

R22 serves as a coordination point for D-glucose 6-phosphate. A UDP-alpha-D-glucose-binding site is contributed by 42–43 (GG). Residues Y94 and D148 each coordinate D-glucose 6-phosphate. UDP-alpha-D-glucose contacts are provided by R290 and K295. R328 contacts D-glucose 6-phosphate. 393–397 (LVAKE) is a UDP-alpha-D-glucose binding site.

This sequence belongs to the glycosyltransferase 20 family. As to quaternary structure, homotetramer.

The enzyme catalyses ADP-alpha-D-glucose + D-glucose 6-phosphate = alpha,alpha-trehalose 6-phosphate + ADP + H(+). It catalyses the reaction CDP-alpha-D-glucose + D-glucose 6-phosphate = alpha,alpha-trehalose 6-phosphate + CDP + H(+). The catalysed reaction is GDP-alpha-D-glucose + D-glucose 6-phosphate = alpha,alpha-trehalose 6-phosphate + GDP + H(+). It carries out the reaction TDP-alpha-D-glucose + D-glucose 6-phosphate = 5-methyl-UDP + alpha,alpha-trehalose 6-phosphate + H(+). The enzyme catalyses D-glucose 6-phosphate + UDP-alpha-D-glucose = alpha,alpha-trehalose 6-phosphate + UDP + H(+). It functions in the pathway glycan biosynthesis; trehalose biosynthesis. Probably involved in the osmoprotection via the biosynthesis of trehalose and in the production of glycogen and alpha-glucan via the TreS-Pep2 branch involved in the biosynthesis of maltose-1-phosphate (M1P). Catalyzes the transfer of glucose from UDP-glucose (UDP-Glc) to D-glucose 6-phosphate (Glc-6-P) to form trehalose-6-phosphate. Probably also able to use ADP-Glc, CDP-Glc, GDP-Glc and TDP-Glc as glucosyl donors. The protein is Trehalose-6-phosphate synthase of Mycobacterium sp. (strain JLS).